A 618-amino-acid polypeptide reads, in one-letter code: UvrABC system protein C (618 aa).

One can recognise a GIY-YIG domain in the interval 20 to 98; sequence TAPGVYRMYA…IKSLSPRYNV (79 aa). One can recognise a UVR domain in the interval 207 to 242; the sequence is DQLGEEIMQSMQQASEALEFERAARLRDLLSSLRSM.

The protein belongs to the UvrC family. As to quaternary structure, interacts with UvrB in an incision complex.

The protein localises to the cytoplasm. The UvrABC repair system catalyzes the recognition and processing of DNA lesions. UvrC both incises the 5' and 3' sides of the lesion. The N-terminal half is responsible for the 3' incision and the C-terminal half is responsible for the 5' incision. In Xanthomonas oryzae pv. oryzae (strain MAFF 311018), this protein is UvrABC system protein C.